The primary structure comprises 97 residues: Large ribosomal subunit protein eL21 (97 aa).

Basic residues predominate over residues 1-24; the sequence is MVQKPHSFRRKTRKKLRKHPRRRG. The tract at residues 1 to 25 is disordered; sequence MVQKPHSFRRKTRKKLRKHPRRRGL.

This sequence belongs to the eukaryotic ribosomal protein eL21 family.

The chain is Large ribosomal subunit protein eL21 (rpl21e) from Pyrococcus horikoshii (strain ATCC 700860 / DSM 12428 / JCM 9974 / NBRC 100139 / OT-3).